The sequence spans 305 residues: UDP-N-acetylenolpyruvoylglucosamine reductase 2 (305 aa).

In terms of domain architecture, FAD-binding PCMH-type spans 33–197 (VGGKADVFVA…LEARFELEEG (165 aa)). The active site involves Arg176. The active-site Proton donor is Ser226. Glu296 is an active-site residue.

This sequence belongs to the MurB family. FAD is required as a cofactor.

Its subcellular location is the cytoplasm. It carries out the reaction UDP-N-acetyl-alpha-D-muramate + NADP(+) = UDP-N-acetyl-3-O-(1-carboxyvinyl)-alpha-D-glucosamine + NADPH + H(+). Its pathway is cell wall biogenesis; peptidoglycan biosynthesis. In terms of biological role, cell wall formation. This chain is UDP-N-acetylenolpyruvoylglucosamine reductase 2, found in Bacillus cereus (strain ZK / E33L).